Here is a 166-residue protein sequence, read N- to C-terminus: Co-chaperone protein HscB homolog (166 aa).

The J domain maps to 3-75 (QYFTLFRIEP…IDRAAYLLKT (73 aa)).

Belongs to the HscB family. In terms of assembly, interacts with HscA and stimulates its ATPase activity.

In terms of biological role, co-chaperone involved in the maturation of iron-sulfur cluster-containing proteins. Seems to help targeting proteins to be folded toward HscA. The polypeptide is Co-chaperone protein HscB homolog (Neisseria gonorrhoeae (strain NCCP11945)).